The following is a 119-amino-acid chain: Beta-2-microglobulin (119 aa).

The first 20 residues, 1 to 20, serve as a signal peptide directing secretion; it reads MGRFVAVALLVLLSLSGLET. The region spanning 25-114 is the Ig-like C1-type domain; sequence PKIQVYSRHP…VTFSTPKTVK (90 aa). A disulfide bond links Cys45 and Cys100.

Belongs to the beta-2-microglobulin family. As to quaternary structure, heterodimer of an alpha chain and a beta chain. Beta-2-microglobulin is the beta-chain of major histocompatibility complex class I molecules.

It is found in the secreted. Functionally, component of the class I major histocompatibility complex (MHC). Involved in the presentation of peptide antigens to the immune system. This chain is Beta-2-microglobulin (B2M), found in Callicebus personatus nigrifrons (Black-fronted titi).